A 453-amino-acid chain; its full sequence is Bifunctional protein GlmU (453 aa).

The interval 1–231 (MERTCLAIIL…EVEMTGCNNR (231 aa)) is pyrophosphorylase. Residues 10–13 (LAAG), Lys24, Gln77, 82–83 (GT), 105–107 (YGD), Gly143, Glu157, Asn172, and Asn229 each bind UDP-N-acetyl-alpha-D-glucosamine. Residue Asp107 coordinates Mg(2+). Asn229 serves as a coordination point for Mg(2+). The linker stretch occupies residues 232–252 (AELAFIERLWQERRRHELMLS). Positions 253-453 (GVTMIAPETV…AIKAAKKGSH (201 aa)) are N-acetyltransferase. UDP-N-acetyl-alpha-D-glucosamine contacts are provided by Arg318 and Lys336. His348 (proton acceptor) is an active-site residue. UDP-N-acetyl-alpha-D-glucosamine-binding residues include Tyr351 and Asn362. Acetyl-CoA contacts are provided by residues Ala365, 371–372 (NY), Ser390, Ser408, and Arg425.

This sequence in the N-terminal section; belongs to the N-acetylglucosamine-1-phosphate uridyltransferase family. It in the C-terminal section; belongs to the transferase hexapeptide repeat family. Homotrimer. Mg(2+) is required as a cofactor.

It localises to the cytoplasm. It carries out the reaction alpha-D-glucosamine 1-phosphate + acetyl-CoA = N-acetyl-alpha-D-glucosamine 1-phosphate + CoA + H(+). The enzyme catalyses N-acetyl-alpha-D-glucosamine 1-phosphate + UTP + H(+) = UDP-N-acetyl-alpha-D-glucosamine + diphosphate. It participates in nucleotide-sugar biosynthesis; UDP-N-acetyl-alpha-D-glucosamine biosynthesis; N-acetyl-alpha-D-glucosamine 1-phosphate from alpha-D-glucosamine 6-phosphate (route II): step 2/2. It functions in the pathway nucleotide-sugar biosynthesis; UDP-N-acetyl-alpha-D-glucosamine biosynthesis; UDP-N-acetyl-alpha-D-glucosamine from N-acetyl-alpha-D-glucosamine 1-phosphate: step 1/1. Its pathway is bacterial outer membrane biogenesis; LPS lipid A biosynthesis. Catalyzes the last two sequential reactions in the de novo biosynthetic pathway for UDP-N-acetylglucosamine (UDP-GlcNAc). The C-terminal domain catalyzes the transfer of acetyl group from acetyl coenzyme A to glucosamine-1-phosphate (GlcN-1-P) to produce N-acetylglucosamine-1-phosphate (GlcNAc-1-P), which is converted into UDP-GlcNAc by the transfer of uridine 5-monophosphate (from uridine 5-triphosphate), a reaction catalyzed by the N-terminal domain. This chain is Bifunctional protein GlmU, found in Rhizobium rhizogenes (strain K84 / ATCC BAA-868) (Agrobacterium radiobacter).